The primary structure comprises 163 residues: Acetolactate synthase isozyme 3 small subunit (163 aa).

An ACT domain is found at 4–78; sequence ILSVLLENES…DVLRVSELGQ (75 aa).

This sequence belongs to the acetolactate synthase small subunit family. Dimer of large and small chains.

The catalysed reaction is 2 pyruvate + H(+) = (2S)-2-acetolactate + CO2. It functions in the pathway amino-acid biosynthesis; L-isoleucine biosynthesis; L-isoleucine from 2-oxobutanoate: step 1/4. It participates in amino-acid biosynthesis; L-valine biosynthesis; L-valine from pyruvate: step 1/4. Sensitive to valine inhibition. The protein is Acetolactate synthase isozyme 3 small subunit (ilvH) of Salmonella typhimurium (strain LT2 / SGSC1412 / ATCC 700720).